A 173-amino-acid chain; its full sequence is Putative phosphoesterase GTNG_0743 (173 aa).

The active-site Proton donor is H34. 2 short sequence motifs (HXTX) span residues 34–37 (HITL) and 115–118 (HITI). H115 acts as the Proton acceptor in catalysis.

Belongs to the 2H phosphoesterase superfamily. YjcG family.

The polypeptide is Putative phosphoesterase GTNG_0743 (Geobacillus thermodenitrificans (strain NG80-2)).